The following is a 579-amino-acid chain: Pre-mRNA-processing factor 17 (579 aa).

Over residues 1 to 19 (MSAAIAALAASYGSGSGSE) the composition is skewed to low complexity. Disordered regions lie at residues 1 to 34 (MSAA…LPAA) and 204 to 237 (DVAK…PGEE). WD repeat units lie at residues 286–326 (GHTK…RCLR), 330–369 (GHSK…CISR), 371–413 (TNRK…IVQE), 416–455 (RHLG…DFKY), 459–498 (PSMH…RLNK), 504–545 (GHMV…LYSR), and 548–578 (AHDK…IKLW).

Component of the catalytic spliceosome C complexes. Component of the postcatalytic spliceosome P complex. Interacts with PPIL1; this interaction leads to CDC40 isomerization. Post-translationally, undergoes isomerization of the peptide bond between Gly-94 and Pro-95. The reaction is catalyzed by PPIL1.

The protein localises to the nucleus. It localises to the nucleus speckle. Its function is as follows. Required for pre-mRNA splicing as component of the activated spliceosome. Plays an important role in embryonic brain development; this function does not require proline peptide bond isomerization. The sequence is that of Pre-mRNA-processing factor 17 (Cdc40) from Mus musculus (Mouse).